We begin with the raw amino-acid sequence, 69 residues long: Large ribosomal subunit protein uL29 (69 aa).

The protein belongs to the universal ribosomal protein uL29 family.

The protein is Large ribosomal subunit protein uL29 of Rhodospirillum centenum (strain ATCC 51521 / SW).